The following is a 436-amino-acid chain: Enolase (436 aa).

Gln167 serves as a coordination point for (2R)-2-phosphoglycerate. The Proton donor role is filled by Glu209. The Mg(2+) site is built by Asp246, Glu291, and Asp318. The (2R)-2-phosphoglycerate site is built by Lys343, Arg372, Ser373, and Lys394. The active-site Proton acceptor is the Lys343.

This sequence belongs to the enolase family. In terms of assembly, component of the RNA degradosome, a multiprotein complex involved in RNA processing and mRNA degradation. The cofactor is Mg(2+).

The protein localises to the cytoplasm. Its subcellular location is the secreted. The protein resides in the cell surface. It catalyses the reaction (2R)-2-phosphoglycerate = phosphoenolpyruvate + H2O. It participates in carbohydrate degradation; glycolysis; pyruvate from D-glyceraldehyde 3-phosphate: step 4/5. In terms of biological role, catalyzes the reversible conversion of 2-phosphoglycerate (2-PG) into phosphoenolpyruvate (PEP). It is essential for the degradation of carbohydrates via glycolysis. The sequence is that of Enolase from Glaesserella parasuis serovar 5 (strain SH0165) (Haemophilus parasuis).